The following is a 375-amino-acid chain: Carbamoyl phosphate synthase small chain (375 aa).

The interval 1–186 (MRALLALEDG…LEPGGCAWVG (186 aa)) is CPSase. L-glutamine-binding residues include Ser45, Gly238, and Gly240. The Glutamine amidotransferase type-1 domain maps to 190–375 (RLVVYDFGIK…RNMVREAAGC (186 aa)). Catalysis depends on Cys265, which acts as the Nucleophile. Residues Leu266, Gln269, Asn307, Gly309, and Phe310 each contribute to the L-glutamine site. Residues His348 and Glu350 contribute to the active site.

The protein belongs to the CarA family. In terms of assembly, composed of two chains; the small (or glutamine) chain promotes the hydrolysis of glutamine to ammonia, which is used by the large (or ammonia) chain to synthesize carbamoyl phosphate. Tetramer of heterodimers (alpha,beta)4.

The enzyme catalyses hydrogencarbonate + L-glutamine + 2 ATP + H2O = carbamoyl phosphate + L-glutamate + 2 ADP + phosphate + 2 H(+). It carries out the reaction L-glutamine + H2O = L-glutamate + NH4(+). The protein operates within amino-acid biosynthesis; L-arginine biosynthesis; carbamoyl phosphate from bicarbonate: step 1/1. It functions in the pathway pyrimidine metabolism; UMP biosynthesis via de novo pathway; (S)-dihydroorotate from bicarbonate: step 1/3. Small subunit of the glutamine-dependent carbamoyl phosphate synthetase (CPSase). CPSase catalyzes the formation of carbamoyl phosphate from the ammonia moiety of glutamine, carbonate, and phosphate donated by ATP, constituting the first step of 2 biosynthetic pathways, one leading to arginine and/or urea and the other to pyrimidine nucleotides. The small subunit (glutamine amidotransferase) binds and cleaves glutamine to supply the large subunit with the substrate ammonia. The protein is Carbamoyl phosphate synthase small chain of Nitratidesulfovibrio vulgaris (strain ATCC 29579 / DSM 644 / CCUG 34227 / NCIMB 8303 / VKM B-1760 / Hildenborough) (Desulfovibrio vulgaris).